A 351-amino-acid polypeptide reads, in one-letter code: S-adenosylmethionine:tRNA ribosyltransferase-isomerase (351 aa).

Belongs to the QueA family. In terms of assembly, monomer.

It localises to the cytoplasm. The enzyme catalyses 7-aminomethyl-7-carbaguanosine(34) in tRNA + S-adenosyl-L-methionine = epoxyqueuosine(34) in tRNA + adenine + L-methionine + 2 H(+). Its pathway is tRNA modification; tRNA-queuosine biosynthesis. Transfers and isomerizes the ribose moiety from AdoMet to the 7-aminomethyl group of 7-deazaguanine (preQ1-tRNA) to give epoxyqueuosine (oQ-tRNA). The protein is S-adenosylmethionine:tRNA ribosyltransferase-isomerase of Idiomarina loihiensis (strain ATCC BAA-735 / DSM 15497 / L2-TR).